A 580-amino-acid polypeptide reads, in one-letter code: Serine/threonine-protein kinase srk1 (580 aa).

Positions 51–61 are enriched in polar residues; that stretch reads VADSTQNPTSK. Residues 51–91 form a disordered region; that stretch reads VADSTQNPTSKPKSRHAHFHETVHENPSEYSRSKCKQPTNE. The Protein kinase domain maps to 124-421; it reads YTLLQKMGDG…IHQFLAHPWI (298 aa). Residues 130–138 and Lys153 contribute to the ATP site; that span reads MGDGAFSNV. Asp257 acts as the Proton acceptor in catalysis. The disordered stretch occupies residues 530–580; the sequence is NLSGENDPSLASRQPAQSQQQSSQRSRNKFKGFQLNLSKATLYNRRHRQKV. Low complexity predominate over residues 537-554; that stretch reads PSLASRQPAQSQQQSSQR.

This sequence belongs to the protein kinase superfamily. CAMK Ser/Thr protein kinase family. CaMK subfamily. Requires Mg(2+) as cofactor. Phosphorylated by sty1.

It localises to the cytoplasm. Its subcellular location is the nucleus. The protein resides in the nucleolus. The protein localises to the spore core. The catalysed reaction is L-seryl-[protein] + ATP = O-phospho-L-seryl-[protein] + ADP + H(+). It catalyses the reaction L-threonyl-[protein] + ATP = O-phospho-L-threonyl-[protein] + ADP + H(+). Its function is as follows. Delays the mitotic G2/M transition by promoting nuclear exclusion of cdc25. During osmotic stress, inhibits the G2/M transition in a sty1 stress-activated MAPK pathway-dependent manner. In Schizosaccharomyces pombe (strain 972 / ATCC 24843) (Fission yeast), this protein is Serine/threonine-protein kinase srk1.